A 389-amino-acid polypeptide reads, in one-letter code: MQLQPAGTGNMASAAAAALVSWGFLDYKTEKYVLTRNCRVGVSQRLLQLAVVVYVIGWALLAKKGYQERDLAPQTSVITKLKGVSVTQVKELENRLWDVADFVKPSQGENVFFLVTNFLVTPAQVQGRCPEHPSVPLANCWADEDCPEGETGTYSHGIKTGQCVVFNGTHRTCEIWSWCPVESGAVPRKPLLAQAKNFTLFIKNTVTFSKFNFSRSNALLTWDNTYFKHCLYDPLSSPYCPVFRIGDLVAMAGGDFEDLALLGGAVGISIHWDCNLDTKGSDCCPQYSFQLQQKGYNFRTANHWWAASGVETRSLLKLYGIRFDILVTGQAGKFALIPTAITVGTGAAWLGMVTFLCDLLLLYVDREAGFYWRTKYEEARAPKTTTNSS.

Residues 1–45 are Cytoplasmic-facing; that stretch reads MQLQPAGTGNMASAAAAALVSWGFLDYKTEKYVLTRNCRVGVSQR. The helical transmembrane segment at 46–66 threads the bilayer; the sequence is LLQLAVVVYVIGWALLAKKGY. At 67-335 the chain is on the extracellular side; the sequence is QERDLAPQTS…LVTGQAGKFA (269 aa). Intrachain disulfides connect Cys-129–Cys-179, Cys-140–Cys-163, and Cys-146–Cys-173. Residues Asn-167, Asn-197, and Asn-212 are each glycosylated (N-linked (GlcNAc...) asparagine). Intrachain disulfides connect Cys-230/Cys-240 and Cys-274/Cys-283. A helical membrane pass occupies residues 336–356; that stretch reads LIPTAITVGTGAAWLGMVTFL. Residues 357 to 389 lie on the Cytoplasmic side of the membrane; the sequence is CDLLLLYVDREAGFYWRTKYEEARAPKTTTNSS.

The protein belongs to the P2X receptor family. As to quaternary structure, unlike most P2RXs, P2RX6 does not seem to form homotrimers. P2RX6 are likely to form as obligate heteromers with other P2RXs subunits. Forms heterotrimer with P2RX2 with a variable subunit stoichiometry determined by subunit expression levels. Forms heterotrimer with P2RX4; functional differences between homomeric P2RX4 and P2RX4/6 heterotrimer are minor. Forms a P2RX2/P2RX4/P2RX6 heterotrimer. Interacts with SF3A1; resulting in a reduction of the splicing activity. In terms of processing, N-glycosylated. N-linked glycosylation can affect trafficking to the membrane and function. Predominantly expressed in skeletal muscle. Also expressed in lung.

It localises to the cell membrane. Its subcellular location is the endoplasmic reticulum. The protein localises to the nucleus. It is found in the nucleus inner membrane. The enzyme catalyses Ca(2+)(in) = Ca(2+)(out). In terms of biological role, acts as a modulatory subunit rather than a functional channel. Unlike other P2XRs members, P2RX6 does not seem to form functional homotrimers. P2RX6 requires the presence of P2RX4 or P2RX2 to form functional heterotrimeric receptors at the plasma membrane. P2RX6 can be translocated to the nucleus, where it interacts with the splicing factor (SF3A1), to reduce the incidence of mRNA splicing. May function as a nuclear regulator of post-transcriptional modifications in neurons. The chain is P2X purinoceptor 6 (P2rx6) from Mus musculus (Mouse).